Consider the following 592-residue polypeptide: Aspartate--tRNA ligase (592 aa).

Glutamate 173 is an L-aspartate binding site. The segment at 197 to 200 (QLFK) is aspartate. L-aspartate is bound at residue arginine 219. ATP is bound by residues 219–221 (RDE) and glutamine 228. Histidine 448 is an L-aspartate binding site. ATP is bound at residue glutamate 482. Arginine 489 lines the L-aspartate pocket. 534–537 (GLDR) provides a ligand contact to ATP.

Belongs to the class-II aminoacyl-tRNA synthetase family. Type 1 subfamily. In terms of assembly, homodimer.

The protein localises to the cytoplasm. The catalysed reaction is tRNA(Asp) + L-aspartate + ATP = L-aspartyl-tRNA(Asp) + AMP + diphosphate. Its function is as follows. Catalyzes the attachment of L-aspartate to tRNA(Asp) in a two-step reaction: L-aspartate is first activated by ATP to form Asp-AMP and then transferred to the acceptor end of tRNA(Asp). In Shewanella putrefaciens (strain CN-32 / ATCC BAA-453), this protein is Aspartate--tRNA ligase.